A 591-amino-acid chain; its full sequence is CDK5RAP3 protein homolog (591 aa).

The span at 232 to 250 (RAGAPSSAKGPASSASAPP) shows a compositional bias: low complexity. Disordered stretches follow at residues 232-252 (RAGA…PPAL) and 269-303 (TAPP…DAGG). The segment covering 279–303 (AGAGASGQGGGIEIDWGDSGGDAGG) has biased composition (gly residues). Short sequence motifs (shuffled ATG8-binding motif) lie at residues 311-314 (IDWD), 334-337 (INWD), and 369-372 (IDWD). Residues 386-401 (NNRAGDVAEGEAAASL) show a composition bias toward low complexity. A disordered region spans residues 386 to 416 (NNRAGDVAEGEAAASLSGGGGGGASSGDPDD).

This sequence belongs to the CDK5RAP3 family. As to quaternary structure, substrate adapter component of the UFM1 ribosome E3 ligase (UREL) complex. Interacts with ATG8 family proteins.

Substrate adapter of E3 ligase complexes mediating ufmylation, the covalent attachment of the ubiquitin-like modifier UFM1 to substrate proteins, and which is involved in various processes, such as ribosome recycling and reticulophagy (also called ER-phagy). This is CDK5RAP3 protein homolog from Chlamydomonas reinhardtii (Chlamydomonas smithii).